The sequence spans 715 residues: Staphylocoagulase (715 aa).

Positions 1–26 are cleaved as a signal peptide; that stretch reads MKKQIISLGALAVASSLFTWDNKADA. A compositionally biased stretch (basic and acidic residues) spans 306–327; the sequence is KYGESETKSPVVKEENKVEDPQ. 2 disordered regions span residues 306–348 and 430–470; these read KYGE…EETT and QGTE…FNKT. The segment covering 431–443 has biased composition (polar residues); it reads GTESTLKGIQGES. 8 repeat units span residues 495–521, 522–548, 549–575, 576–602, 603–629, 630–656, 657–683, and 684–710. Residues 495–710 form an 8 X 27 AA tandem repeats of A-R-P-[RT]-[FQY]-[NK]-K-[PA]-S-[EK]-T-N-A-Y-N-V-T-T-[NH]-[QAG]-[DN]-G-[TQ]-[VA]-[ST]-Y-G region; it reads ARPRFNKPSE…THADGTATYG (216 aa). The segment at 674–697 is disordered; sequence THGNGQVSYGARPTYNKPSKTNAY.

The protein belongs to the staphylocoagulase family.

Functionally, staphylocoagulase is an extracellular protein which specifically forms a complex with human prothrombin. This complex named staphylothrombin can clot fibrinogen without any proteolytic cleavage of prothrombin. This chain is Staphylocoagulase, found in Staphylococcus aureus.